A 149-amino-acid polypeptide reads, in one-letter code: UPF0260 protein PSEEN4031 (149 aa).

It belongs to the UPF0260 family.

This is UPF0260 protein PSEEN4031 from Pseudomonas entomophila (strain L48).